The sequence spans 337 residues: UDP-glucose 4-epimerase (337 aa).

Residues 11-12 (YI), 31-36 (DNLSNA), 58-59 (DL), 80-84 (FAGLK), N99, S124, Y149, K153, and F178 each bind NAD(+). 2 residues coordinate substrate: S124 and Y149. Catalysis depends on Y149, which acts as the Proton acceptor. Substrate is bound by residues N179, 199–200 (NL), 216–218 (GIF), R231, and 292–295 (RDGD).

It belongs to the NAD(P)-dependent epimerase/dehydratase family. Homodimer. The cofactor is NAD(+).

The enzyme catalyses UDP-alpha-D-glucose = UDP-alpha-D-galactose. Its pathway is carbohydrate metabolism; galactose metabolism. Functionally, involved in the metabolism of galactose. Catalyzes the conversion of UDP-galactose (UDP-Gal) to UDP-glucose (UDP-Glc) through a mechanism involving the transient reduction of NAD. This is UDP-glucose 4-epimerase (galE) from Erwinia amylovora (Fire blight bacteria).